Reading from the N-terminus, the 204-residue chain is Holliday junction branch migration complex subunit RuvA (204 aa).

The tract at residues 1 to 64 is domain I; that stretch reads MIGRVTGILV…EDAHLLFGFS (64 aa). The domain II stretch occupies residues 65–143; it reads HKQDRSLFRE…GLQQTDFFIK (79 aa). The tract at residues 144–155 is flexible linker; the sequence is SSHLPGIKCSKL. A domain III region spans residues 156–204; that stretch reads DQSLQLDEAVSALIALGYKPIEAEKMVKKVLKADLTSEQLIREALKAAL.

Belongs to the RuvA family. As to quaternary structure, homotetramer. Forms an RuvA(8)-RuvB(12)-Holliday junction (HJ) complex. HJ DNA is sandwiched between 2 RuvA tetramers; dsDNA enters through RuvA and exits via RuvB. An RuvB hexamer assembles on each DNA strand where it exits the tetramer. Each RuvB hexamer is contacted by two RuvA subunits (via domain III) on 2 adjacent RuvB subunits; this complex drives branch migration. In the full resolvosome a probable DNA-RuvA(4)-RuvB(12)-RuvC(2) complex forms which resolves the HJ.

The protein resides in the cytoplasm. Its function is as follows. The RuvA-RuvB-RuvC complex processes Holliday junction (HJ) DNA during genetic recombination and DNA repair, while the RuvA-RuvB complex plays an important role in the rescue of blocked DNA replication forks via replication fork reversal (RFR). RuvA specifically binds to HJ cruciform DNA, conferring on it an open structure. The RuvB hexamer acts as an ATP-dependent pump, pulling dsDNA into and through the RuvAB complex. HJ branch migration allows RuvC to scan DNA until it finds its consensus sequence, where it cleaves and resolves the cruciform DNA. This chain is Holliday junction branch migration complex subunit RuvA, found in Histophilus somni (strain 2336) (Haemophilus somnus).